Here is a 437-residue protein sequence, read N- to C-terminus: Probable indole-3-pyruvate monooxygenase YUCCA3 (437 aa).

41–46 (GAGPSG) contacts FAD. 212-217 (GCGNSG) contacts NADP(+).

Belongs to the FMO family. FAD is required as a cofactor.

It carries out the reaction indole-3-pyruvate + NADPH + O2 + H(+) = (indol-3-yl)acetate + CO2 + NADP(+) + H2O. Its pathway is plant hormone metabolism; auxin biosynthesis. Functionally, involved in auxin biosynthesis. Belongs to the set of redundant YUCCA genes probably responsible for auxin biosynthesis in roots. In Arabidopsis thaliana (Mouse-ear cress), this protein is Probable indole-3-pyruvate monooxygenase YUCCA3 (YUC3).